Consider the following 223-residue polypeptide: Agamous-like MADS-box protein AGL11 (223 aa).

Residues 1–61 (MGRGKIEIKR…GRVYEYSNNN (61 aa)) form the MADS-box domain. The K-box domain occupies 87 to 177 (AQYYQQESAK…RTKIAEVERL (91 aa)).

It is found in the nucleus. Functionally, probable transcription factor involved in seed development. This is Agamous-like MADS-box protein AGL11 from Vitis vinifera (Grape).